Here is a 192-residue protein sequence, read N- to C-terminus: Probable GTP-binding protein EngB (192 aa).

In terms of domain architecture, EngB-type G spans 22–192 (NLPQIVIVGR…QVLSIFEKYA (171 aa)). Residues 30–37 (GRSNVGKS), 57–61 (GKTRG), 75–78 (DLPG), 142–145 (TKAD), and 173–175 (FSA) each bind GTP. 2 residues coordinate Mg(2+): Ser37 and Thr59.

Belongs to the TRAFAC class TrmE-Era-EngA-EngB-Septin-like GTPase superfamily. EngB GTPase family. The cofactor is Mg(2+).

Functionally, necessary for normal cell division and for the maintenance of normal septation. The protein is Probable GTP-binding protein EngB of Thermoanaerobacter pseudethanolicus (strain ATCC 33223 / 39E) (Clostridium thermohydrosulfuricum).